A 124-amino-acid chain; its full sequence is MARIAGIDLPKNKRIEIALTYIYGIGRPTAQKILEQANIDGNTKSDDLTENQINSIRHVIDSHYKVEGDLRTEVSMNIKRLMDLGCYRGLRHRRGLPVRGQRTHTNARTRKGPRRSVMGKRKKA.

The disordered stretch occupies residues 95–124 (GLPVRGQRTHTNARTRKGPRRSVMGKRKKA).

It belongs to the universal ribosomal protein uS13 family. As to quaternary structure, part of the 30S ribosomal subunit. Forms a loose heterodimer with protein S19. Forms two bridges to the 50S subunit in the 70S ribosome.

Located at the top of the head of the 30S subunit, it contacts several helices of the 16S rRNA. In the 70S ribosome it contacts the 23S rRNA (bridge B1a) and protein L5 of the 50S subunit (bridge B1b), connecting the 2 subunits; these bridges are implicated in subunit movement. Contacts the tRNAs in the A and P-sites. This is Small ribosomal subunit protein uS13 from Syntrophobacter fumaroxidans (strain DSM 10017 / MPOB).